A 421-amino-acid polypeptide reads, in one-letter code: Testin (421 aa).

The 108-residue stretch at 92–199 (MILTNPVAAK…GDVKLPREMD (108 aa)) folds into the PET domain. The interval 133-164 (EKQPVAGSEGAQYRKKQLAKQLPAHDQDPSKC) is disordered. Over residues 155–164 (PAHDQDPSKC) the composition is skewed to basic and acidic residues. LIM zinc-binding domains are found at residues 234 to 297 (YSCY…CDSE), 299 to 359 (PRCA…NHAV), and 362 to 421 (QGCH…KMMS).

The protein belongs to the prickle / espinas / testin family. In terms of assembly, interacts via LIM domain 1 with ZYX. Interacts (via LIM domain 3) with ENAH and VASP. Interacts with ALKBH4, talin, actin, alpha-actinin, GRIP1 and PXN. Interacts (via LIM domain 2) with ACTL7A (via N-terminus). Heterodimer with ACTL7A; the heterodimer interacts with ENAH to form a heterotrimer.

The protein localises to the cytoplasm. The protein resides in the cell junction. It is found in the focal adhesion. Scaffold protein that may play a role in cell adhesion, cell spreading and in the reorganization of the actin cytoskeleton. Plays a role in the regulation of cell proliferation. May act as a tumor suppressor. The protein is Testin (TES) of Equus caballus (Horse).